The sequence spans 216 residues: MSLVGGFPHHPVVHHEGYPLRRRRCRRRRRHPLRPRGEPLLHGWLISSHPEMSPPDYSMALSYSPEYANGAPGMDHSHYGGVPPGSGPPGLGGPRPVKRRGTANRKERRRTQSINSAFAELRECIPNVPADTKLSKIKTLRLATSYIAYLMDLLPKDDQNGEAEAFKAEIKKTDVKEEKRKKELNEILKSTVSSSDKKTKGRTGWPQHVWALELKQ.

A disordered region spans residues 74-115; sequence MDHSHYGGVPPGSGPPGLGGPRPVKRRGTANRKERRRTQSIN. The span at 82-93 shows a compositional bias: gly residues; the sequence is VPPGSGPPGLGG. A compositionally biased stretch (basic residues) spans 96-111; it reads PVKRRGTANRKERRRT. The 53-residue stretch at 98–150 folds into the bHLH domain; that stretch reads KRRGTANRKERRRTQSINSAFAELRECIPNVPADTKLSKIKTLRLATSYIAYL.

As to quaternary structure, efficient DNA binding requires dimerization with another bHLH protein.

It is found in the nucleus. In terms of biological role, essential for cardiac morphogenesis. Binds DNA on E-box consensus sequence 5'-CANNTG-3'. Plays an important role in limb development, particularly in the establishment of anterior-posterior polarization of the limb bud. The sequence is that of Heart- and neural crest derivatives-expressed protein 2 (HAND2) from Gallus gallus (Chicken).